The following is a 411-amino-acid chain: 2,3-bisphosphoglycerate-independent phosphoglycerate mutase (411 aa).

Belongs to the BPG-independent phosphoglycerate mutase family. A-PGAM subfamily.

It carries out the reaction (2R)-2-phosphoglycerate = (2R)-3-phosphoglycerate. Its pathway is carbohydrate degradation; glycolysis; pyruvate from D-glyceraldehyde 3-phosphate: step 3/5. In terms of biological role, catalyzes the interconversion of 2-phosphoglycerate and 3-phosphoglycerate. The sequence is that of 2,3-bisphosphoglycerate-independent phosphoglycerate mutase from Pyrobaculum calidifontis (strain DSM 21063 / JCM 11548 / VA1).